Here is a 361-residue protein sequence, read N- to C-terminus: 1-deoxy-D-xylulose 5-phosphate reductoisomerase (361 aa).

NADPH is bound by residues T12, G13, S14, I15, G38, and N102. K103 lines the 1-deoxy-D-xylulose 5-phosphate pocket. E104 serves as a coordination point for NADPH. D126 provides a ligand contact to Mn(2+). The 1-deoxy-D-xylulose 5-phosphate site is built by S127, E128, S152, and H175. E128 lines the Mn(2+) pocket. G181 contributes to the NADPH binding site. Residues S188, N193, K194, and E197 each coordinate 1-deoxy-D-xylulose 5-phosphate. A Mn(2+)-binding site is contributed by E197.

This sequence belongs to the DXR family. Mg(2+) serves as cofactor. The cofactor is Mn(2+).

The catalysed reaction is 2-C-methyl-D-erythritol 4-phosphate + NADP(+) = 1-deoxy-D-xylulose 5-phosphate + NADPH + H(+). It functions in the pathway isoprenoid biosynthesis; isopentenyl diphosphate biosynthesis via DXP pathway; isopentenyl diphosphate from 1-deoxy-D-xylulose 5-phosphate: step 1/6. Catalyzes the NADPH-dependent rearrangement and reduction of 1-deoxy-D-xylulose-5-phosphate (DXP) to 2-C-methyl-D-erythritol 4-phosphate (MEP). The protein is 1-deoxy-D-xylulose 5-phosphate reductoisomerase of Leifsonia xyli subsp. xyli (strain CTCB07).